The primary structure comprises 279 residues: Aspartate/glutamate leucyltransferase (279 aa).

The interval 245 to 279 is disordered; it reads ARERGARPPRGPGALKDACDLPLSDAQPADIEDLD.

This sequence belongs to the R-transferase family. Bpt subfamily.

The protein resides in the cytoplasm. The enzyme catalyses N-terminal L-glutamyl-[protein] + L-leucyl-tRNA(Leu) = N-terminal L-leucyl-L-glutamyl-[protein] + tRNA(Leu) + H(+). It catalyses the reaction N-terminal L-aspartyl-[protein] + L-leucyl-tRNA(Leu) = N-terminal L-leucyl-L-aspartyl-[protein] + tRNA(Leu) + H(+). Functions in the N-end rule pathway of protein degradation where it conjugates Leu from its aminoacyl-tRNA to the N-termini of proteins containing an N-terminal aspartate or glutamate. The polypeptide is Aspartate/glutamate leucyltransferase (Caulobacter vibrioides (strain ATCC 19089 / CIP 103742 / CB 15) (Caulobacter crescentus)).